We begin with the raw amino-acid sequence, 60 residues long: Large ribosomal subunit protein bL32 (60 aa).

Basic residues predominate over residues 1 to 19 (MAVPKRKKSKSRRNMHRSH). Residues 1-24 (MAVPKRKKSKSRRNMHRSHHAIEP) are disordered.

The protein belongs to the bacterial ribosomal protein bL32 family.

In Wolbachia pipientis wMel, this protein is Large ribosomal subunit protein bL32.